A 301-amino-acid chain; its full sequence is Large ribosomal subunit protein uL18z (301 aa).

It belongs to the universal ribosomal protein uL18 family. In terms of assembly, component of the large ribosomal subunit (LSU). As to expression, expressed in seedlings, roots, stems, leaves, inflorescences and siliques.

Its subcellular location is the cytoplasm. It localises to the nucleus. The protein localises to the nucleolus. It is found in the nucleoplasm. In terms of biological role, component of the ribosome, a large ribonucleoprotein complex responsible for the synthesis of proteins in the cell. The small ribosomal subunit (SSU) binds messenger RNAs (mRNAs) and translates the encoded message by selecting cognate aminoacyl-transfer RNA (tRNA) molecules. The large subunit (LSU) contains the ribosomal catalytic site termed the peptidyl transferase center (PTC), which catalyzes the formation of peptide bonds, thereby polymerizing the amino acids delivered by tRNAs into a polypeptide chain. The nascent polypeptides leave the ribosome through a tunnel in the LSU and interact with protein factors that function in enzymatic processing, targeting, and the membrane insertion of nascent chains at the exit of the ribosomal tunnel. Seems involved in the regulation of cell proliferation. Essential in leaf polarity establishment, probably having a role for translation in leaf dorsoventral patterning to specify leaf adaxial identity. This is Large ribosomal subunit protein uL18z from Arabidopsis thaliana (Mouse-ear cress).